We begin with the raw amino-acid sequence, 541 residues long: Glutamyl-tRNA(Gln) amidotransferase subunit B, mitochondrial (541 aa).

This sequence belongs to the GatB/GatE family. GatB subfamily. As to quaternary structure, subunit of the heterotrimeric GatFAB amidotransferase (AdT) complex, composed of A (HER2), B (PET112) and F (YGR102C) subunits.

The protein localises to the mitochondrion. It catalyses the reaction L-glutamyl-tRNA(Gln) + L-glutamine + ATP + H2O = L-glutaminyl-tRNA(Gln) + L-glutamate + ADP + phosphate + H(+). Functionally, allows the formation of correctly charged Gln-tRNA(Gln) through the transamidation of misacylated Glu-tRNA(Gln) in the mitochondria. The reaction takes place in the presence of glutamine and ATP through an activated gamma-phospho-Glu-tRNA(Gln). The sequence is that of Glutamyl-tRNA(Gln) amidotransferase subunit B, mitochondrial from Saccharomyces cerevisiae (strain ATCC 204508 / S288c) (Baker's yeast).